The following is a 285-amino-acid chain: Methionine aminopeptidase 2 (285 aa).

Residue H114 participates in substrate binding. A divalent metal cation contacts are provided by D131, D142, and H205. H212 provides a ligand contact to substrate. Residues E238 and E269 each contribute to the a divalent metal cation site.

As to quaternary structure, monomer. The cofactor is Co(2+). Zn(2+) is required as a cofactor. It depends on Mn(2+) as a cofactor. Fe(2+) serves as cofactor.

The catalysed reaction is Release of N-terminal amino acids, preferentially methionine, from peptides and arylamides.. Its activity is regulated as follows. Inhibited by bengamide derivatives and by various metalloform-selective inhibitors. Removes the N-terminal methionine from nascent proteins. The N-terminal methionine is often cleaved when the second residue in the primary sequence is small and uncharged (Met-Ala-, Cys, Gly, Pro, Ser, Thr, or Val). Requires deformylation of the N(alpha)-formylated initiator methionine before it can be hydrolyzed. The polypeptide is Methionine aminopeptidase 2 (Mycobacterium tuberculosis (strain ATCC 25618 / H37Rv)).